Consider the following 675-residue polypeptide: Methionine--tRNA ligase (675 aa).

Positions P15 to H25 match the 'HIGH' region motif. Residues C146, C149, C159, and C162 each contribute to the Zn(2+) site. The short motif at K332–S336 is the 'KMSKS' region element. K335 contacts ATP. Residues D574–K675 enclose the tRNA-binding domain.

This sequence belongs to the class-I aminoacyl-tRNA synthetase family. MetG type 1 subfamily. Homodimer. The cofactor is Zn(2+).

It localises to the cytoplasm. The enzyme catalyses tRNA(Met) + L-methionine + ATP = L-methionyl-tRNA(Met) + AMP + diphosphate. In terms of biological role, is required not only for elongation of protein synthesis but also for the initiation of all mRNA translation through initiator tRNA(fMet) aminoacylation. The protein is Methionine--tRNA ligase of Shewanella amazonensis (strain ATCC BAA-1098 / SB2B).